Consider the following 198-residue polypeptide: Na(+)-translocating NADH-quinone reductase subunit E (198 aa).

6 helical membrane-spanning segments follow: residues 11-31 (SIFIENLALSFFLGMCTFLAV), 39-59 (MGLGIAVIVVQTVAVPANNLI), 77-97 (FLSFITFIGVIAALVQILEMA), 110-130 (GIFLPLITVNCAIFGGVSFMV), 140-160 (VVYGVGSGAGWMLAIVAMAGI), and 176-196 (LGITFITAGLMALGFMSFSGI).

It belongs to the NqrDE/RnfAE family. In terms of assembly, composed of six subunits; NqrA, NqrB, NqrC, NqrD, NqrE and NqrF.

It is found in the cell inner membrane. The enzyme catalyses a ubiquinone + n Na(+)(in) + NADH + H(+) = a ubiquinol + n Na(+)(out) + NAD(+). NQR complex catalyzes the reduction of ubiquinone-1 to ubiquinol by two successive reactions, coupled with the transport of Na(+) ions from the cytoplasm to the periplasm. NqrA to NqrE are probably involved in the second step, the conversion of ubisemiquinone to ubiquinol. The sequence is that of Na(+)-translocating NADH-quinone reductase subunit E from Aeromonas hydrophila subsp. hydrophila (strain ATCC 7966 / DSM 30187 / BCRC 13018 / CCUG 14551 / JCM 1027 / KCTC 2358 / NCIMB 9240 / NCTC 8049).